A 20-amino-acid chain; its full sequence is Alkaline phosphatase (20 aa).

Expressed by the venom gland.

The protein localises to the secreted. The catalysed reaction is a phosphate monoester + H2O = an alcohol + phosphate. Has hemorrhagic activity. The sequence is that of Alkaline phosphatase from Deinagkistrodon acutus (Hundred-pace snake).